A 146-amino-acid polypeptide reads, in one-letter code: Aminoglycoside N(6')-acetyltransferase type 1 (146 aa).

The N-acetyltransferase domain maps to 1-146 (MIVICDHDNL…RVVFYRKTLG (146 aa)). Trp-21, Tyr-66, Glu-79, and Asp-115 together coordinate substrate. Asn-120 lines the acetyl-CoA pocket. Residue Glu-136 coordinates substrate.

As to quaternary structure, homodimer.

It catalyses the reaction kanamycin B + acetyl-CoA = N(6')-acetylkanamycin B + CoA + H(+). Functionally, catalyzes the transfer of an acetyl group from acetyl-CoA to the 6'-amino group of aminoglycoside molecules conferring resistance to antibiotics containing the purpurosamine ring including amikacin, tobramycin, netilmicin, isepamicin and sisomicin. This Serratia marcescens protein is Aminoglycoside N(6')-acetyltransferase type 1.